Here is a 161-residue protein sequence, read N- to C-terminus: uncharacterized protein (161 aa).

A helical transmembrane segment spans residues 16-36; that stretch reads KLGLVVAIFFFMMGTTVVVLY.

It is found in the membrane. This is an uncharacterized protein from Encephalitozoon cuniculi (strain GB-M1) (Microsporidian parasite).